Here is a 166-residue protein sequence, read N- to C-terminus: MANAQATEEEIEIVEEGTTAPQVTEPPLPATIAGLAALLEIPLDDCLVPCNFCGKFLSHLEACEFDDKRLSLIWKGHLVYACCRWCCTATATFEFNEFYEHTVTGREIEFVTGKSVFDIDVRCQNCMRYLDSIEKLDICGRRLPFHKVRDSWKGICRLCKHFYNDW.

Zinc fingers lie at residues C50 to C86 and C123 to C159.

This sequence belongs to the papillomaviridae E6 protein family. In terms of assembly, forms homodimers. Interacts with ubiquitin-protein ligase UBE3A/E6-AP; this interaction stimulates UBE3A ubiquitin activity. Interacts with host BAK1.

It localises to the host cytoplasm. It is found in the host nucleus. Plays a major role in the induction and maintenance of cellular transformation. E6 associates with host UBE3A/E6-AP ubiquitin-protein ligase and modulates its activity. Protects host keratinocytes from apoptosis by mediating the degradation of host BAK1. May also inhibit host immune response. The sequence is that of Protein E6 from Homo sapiens (Human).